Reading from the N-terminus, the 493-residue chain is Poly(ribitol-phosphate) alpha-N-acetylglucosaminyltransferase (493 aa).

Residues G17, K59, H249, R326, K331, T383, and E403–E411 contribute to the UDP-N-acetyl-alpha-D-glucosamine site.

The protein belongs to the glycosyltransferase group 1 family. Homotrimer.

It is found in the cytoplasm. It catalyses the reaction 4-O-[(D-ribitylphospho)(n)-di{(2R)-glycerylphospho}]-N-acetyl-beta-D-mannosaminyl-(1-&gt;4)-N-acetyl-alpha-D-glucosaminyl di-trans,octa-cis-undecaprenyl diphosphate + n UDP-N-acetyl-alpha-D-glucosamine = 4-O-([2-N-acetyl-alpha-D-glucosaminyl-1-D-ribitylphospho](n)-di{[2R]-1-glycerylphospho})-N-acetyl-beta-D-mannosaminyl-(1-&gt;4)-N-acetyl-alpha-D-glucosaminyl di-trans,octa-cis-undecaprenyl diphosphate + n UDP + n H(+). It functions in the pathway cell wall biogenesis; poly(ribitol phosphate) teichoic acid biosynthesis. In terms of biological role, attaches N-acetyl-alpha-D-glucosamine residues to poly(RboP)-wall teichoic acids (WTAs). This is Poly(ribitol-phosphate) alpha-N-acetylglucosaminyltransferase from Staphylococcus aureus (strain COL).